We begin with the raw amino-acid sequence, 387 residues long: Sorting nexin-7 (387 aa).

In terms of domain architecture, PX spans 30 to 151 (KDLFITVDEP…IFLTAQAWEL (122 aa)). 4 residues coordinate a 1,2-diacyl-sn-glycero-3-phospho-(1D-myo-inositol-3-phosphate): R73, Q75, K103, and R117. One can recognise a BAR domain in the interval 178–387 (GVKNRPEEFM…HLEEASEDKP (210 aa)).

It belongs to the sorting nexin family. As to quaternary structure, heterodimer; heterodimerizes with SNX4.

The protein resides in the early endosome membrane. Involved in the regulation of endocytosis and in several stages of intracellular trafficking. Together with SNX4, involved in autophagosome assembly by regulating trafficking and recycling of phospholipid scramblase ATG9A. In Homo sapiens (Human), this protein is Sorting nexin-7.